Here is a 335-residue protein sequence, read N- to C-terminus: Fructose-1,6-bisphosphatase class 1 (335 aa).

Mg(2+) contacts are provided by Glu89, Asp112, Leu114, and Asp115. Substrate contacts are provided by residues 115–118 (DGSS), Asn208, Tyr241, and Lys271. Residue Glu277 participates in Mg(2+) binding.

The protein belongs to the FBPase class 1 family. Homotetramer. It depends on Mg(2+) as a cofactor.

It is found in the cytoplasm. It catalyses the reaction beta-D-fructose 1,6-bisphosphate + H2O = beta-D-fructose 6-phosphate + phosphate. The protein operates within carbohydrate biosynthesis; gluconeogenesis. The chain is Fructose-1,6-bisphosphatase class 1 from Proteus mirabilis (strain HI4320).